The sequence spans 204 residues: 8-oxoguanine DNA glycosylase/AP lyase (204 aa).

Residues Lys129 and Asp147 contribute to the active site.

The protein belongs to the type-2 OGG1 family.

The enzyme catalyses 2'-deoxyribonucleotide-(2'-deoxyribose 5'-phosphate)-2'-deoxyribonucleotide-DNA = a 3'-end 2'-deoxyribonucleotide-(2,3-dehydro-2,3-deoxyribose 5'-phosphate)-DNA + a 5'-end 5'-phospho-2'-deoxyribonucleoside-DNA + H(+). Functionally, catalyzes the excision of an oxidatively damaged form of guanine (7,8-dihydro-8-oxoguanine = 8-oxoG) from DNA. Also cleaves the DNA backbone at apurinic/apyrimidinic sites (AP sites). Prefers oligomers containing 8-oxoG:C, 8-oxoG:T and 8-oxoG:G base pairs, and is less effective on oligomers containing 8-oxoG:A mispairs. The chain is 8-oxoguanine DNA glycosylase/AP lyase from Thermoplasma volcanium (strain ATCC 51530 / DSM 4299 / JCM 9571 / NBRC 15438 / GSS1).